Consider the following 245-residue polypeptide: 1-(5-phosphoribosyl)-5-[(5-phosphoribosylamino)methylideneamino] imidazole-4-carboxamide isomerase (245 aa).

The active-site Proton acceptor is the aspartate 7. Aspartate 129 serves as the catalytic Proton donor.

This sequence belongs to the HisA/HisF family.

The protein resides in the cytoplasm. It carries out the reaction 1-(5-phospho-beta-D-ribosyl)-5-[(5-phospho-beta-D-ribosylamino)methylideneamino]imidazole-4-carboxamide = 5-[(5-phospho-1-deoxy-D-ribulos-1-ylimino)methylamino]-1-(5-phospho-beta-D-ribosyl)imidazole-4-carboxamide. It participates in amino-acid biosynthesis; L-histidine biosynthesis; L-histidine from 5-phospho-alpha-D-ribose 1-diphosphate: step 4/9. The sequence is that of 1-(5-phosphoribosyl)-5-[(5-phosphoribosylamino)methylideneamino] imidazole-4-carboxamide isomerase from Shewanella oneidensis (strain ATCC 700550 / JCM 31522 / CIP 106686 / LMG 19005 / NCIMB 14063 / MR-1).